The primary structure comprises 184 residues: ATP synthase subunit b, chloroplastic (184 aa).

The helical transmembrane segment at 26-48 (ILATNLINLSVVLGVLIFFGKGV) threads the bilayer.

It belongs to the ATPase B chain family. F-type ATPases have 2 components, F(1) - the catalytic core - and F(0) - the membrane proton channel. F(1) has five subunits: alpha(3), beta(3), gamma(1), delta(1), epsilon(1). F(0) has four main subunits: a(1), b(1), b'(1) and c(10-14). The alpha and beta chains form an alternating ring which encloses part of the gamma chain. F(1) is attached to F(0) by a central stalk formed by the gamma and epsilon chains, while a peripheral stalk is formed by the delta, b and b' chains.

The protein resides in the plastid. It is found in the chloroplast thylakoid membrane. In terms of biological role, f(1)F(0) ATP synthase produces ATP from ADP in the presence of a proton or sodium gradient. F-type ATPases consist of two structural domains, F(1) containing the extramembraneous catalytic core and F(0) containing the membrane proton channel, linked together by a central stalk and a peripheral stalk. During catalysis, ATP synthesis in the catalytic domain of F(1) is coupled via a rotary mechanism of the central stalk subunits to proton translocation. Component of the F(0) channel, it forms part of the peripheral stalk, linking F(1) to F(0). In Calycanthus floridus var. glaucus (Eastern sweetshrub), this protein is ATP synthase subunit b, chloroplastic.